Reading from the N-terminus, the 126-residue chain is Small nuclear ribonucleoprotein Sm D3 (126 aa).

The residue at position 2 (Ser-2) is an N-acetylserine. Positions 5 to 77 (VPIKVLHEAE…IRFLILPDML (73 aa)) constitute a Sm domain. A run of 5 repeats spans residues 110–111 (RG), 112–113 (RG), 114–115 (RG), 116–117 (MG), and 118–119 (RG). The segment at 110 to 119 (RGRGRGMGRG) is 5 X 2 AA tandem repeats of [RM]-G; required for interaction with SMN1.

It belongs to the snRNP core protein family. As to quaternary structure, core component of the spliceosomal U1, U2, U4 and U5 small nuclear ribonucleoproteins (snRNPs), the building blocks of the spliceosome. Most spliceosomal snRNPs contain a common set of Sm proteins, SNRPB, SNRPD1, SNRPD2, SNRPD3, SNRPE, SNRPF and SNRPG that assemble in a heptameric protein ring on the Sm site of the small nuclear RNA to form the core snRNP. Component of the U1 snRNP. The U1 snRNP is composed of the U1 snRNA and the 7 core Sm proteins SNRPB, SNRPD1, SNRPD2, SNRPD3, SNRPE, SNRPF and SNRPG, and at least three U1 snRNP-specific proteins SNRNP70/U1-70K, SNRPA/U1-A and SNRPC/U1-C. Component of the U4/U6-U5 tri-snRNP complex composed of the U4, U6 and U5 snRNAs and at least PRPF3, PRPF4, PRPF6, PRPF8, PRPF31, SNRNP200, TXNL4A, SNRNP40, SNRPB, SNRPD1, SNRPD2, SNRPD3, SNRPE, SNRPF, SNRPG, DDX23, CD2BP2, PPIH, SNU13, EFTUD2, SART1 and USP39, plus LSM2, LSM3, LSM4, LSM5, LSM6, LSM7 and LSM8. Component of the U7 snRNP complex, or U7 Sm protein core complex, that is composed of the U7 snRNA and at least LSM10, LSM11, SNRPB, SNRPD3, SNRPE, SNRPF and SNRPG; the complex does not contain SNRPD1 and SNRPD2. Component of the minor spliceosome, which splices U12-type introns. Part of the SMN-Sm complex that contains SMN1, GEMIN2/SIP1, DDX20/GEMIN3, GEMIN4, GEMIN5, GEMIN6, GEMIN7, GEMIN8, STRAP/UNRIP and the Sm proteins SNRPB, SNRPD1, SNRPD2, SNRPD3, SNRPE, SNRPF and SNRPG; catalyzes core snRNPs assembly. Forms a 6S pICln-Sm complex composed of CLNS1A/pICln, SNRPD1, SNRPD2, SNRPE, SNRPF and SNRPG; ring-like structure where CLNS1A/pICln mimics additional Sm proteins and which is unable to assemble into the core snRNP. Interacts (via C-terminus) with SMN1 (via Tudor domain); the interaction is direct. In terms of processing, methylated on arginine residues by PRMT5 and PRMT7; probable asymmetric dimethylation which is required for assembly and biogenesis of snRNPs.

It is found in the cytoplasm. The protein resides in the cytosol. The protein localises to the nucleus. In terms of biological role, plays a role in pre-mRNA splicing as a core component of the spliceosomal U1, U2, U4 and U5 small nuclear ribonucleoproteins (snRNPs), the building blocks of the spliceosome. Component of both the pre-catalytic spliceosome B complex and activated spliceosome C complexes. As a component of the minor spliceosome, involved in the splicing of U12-type introns in pre-mRNAs. As part of the U7 snRNP it is involved in histone pre-mRNA 3'-end processing. The chain is Small nuclear ribonucleoprotein Sm D3 (SNRPD3) from Homo sapiens (Human).